A 793-amino-acid polypeptide reads, in one-letter code: DNA mismatch repair protein MutS (793 aa).

589-596 (GPNMSGKS) contacts ATP.

This sequence belongs to the DNA mismatch repair MutS family.

This protein is involved in the repair of mismatches in DNA. It is possible that it carries out the mismatch recognition step. This protein has a weak ATPase activity. This is DNA mismatch repair protein MutS from Thermotoga petrophila (strain ATCC BAA-488 / DSM 13995 / JCM 10881 / RKU-1).